A 219-amino-acid chain; its full sequence is GTP-binding protein Rit1 (219 aa).

GTP contacts are provided by residues 28 to 35 (GAGGVGKS), 75 to 79 (DTAGQ), and 134 to 137 (NKSD).

The protein belongs to the small GTPase superfamily. Ras family. Interacts with AFDN, the C-terminal domain of RALGDS and RLF, but not with RIN1 and PIK3CA. RLF binds exclusively to the active GTP-bound form. Strongly interacts with BRAF, but only weakly with RAF1. BARF and RAF1 association is dependent upon the GTP-bound state. Interacts with RGL3. In terms of tissue distribution, expressed in many tissues.

It localises to the cell membrane. It catalyses the reaction GTP + H2O = GDP + phosphate + H(+). Its activity is regulated as follows. Alternates between an inactive form bound to GDP and an active form bound to GTP. Plays a crucial role in coupling NGF stimulation to the activation of both EPHB2 and MAPK14 signaling pathways and in NGF-dependent neuronal differentiation. Involved in ELK1 transactivation through the Ras-MAPK signaling cascade that mediates a wide variety of cellular functions, including cell proliferation, survival, and differentiation. This is GTP-binding protein Rit1 (Rit1) from Mus musculus (Mouse).